A 325-amino-acid polypeptide reads, in one-letter code: Mitochondrial thiamine pyrophosphate carrier 1 (325 aa).

Solcar repeat units lie at residues 12 to 111 (GSRL…TTLL), 122 to 209 (PPSA…LRPH), and 216 to 312 (PFSS…ALKF). 6 consecutive transmembrane segments (helical) span residues 17–35 (VTAAGATAGLVARFVIAPL), 92–108 (LLYVCYSAIQFTTYRTT), 127–143 (SFVAGAIGGGTATAATY), 184–200 (VWDRAWAQIIPYMSFFF), 223–239 (VARTMASVMAKSRTFPL), and 287–304 (GLTVSLLKAAPASAVTMW).

It belongs to the mitochondrial carrier (TC 2.A.29) family.

It localises to the mitochondrion inner membrane. Mitochondrial transporter that mediates uptake of thiamine pyrophosphate (ThPP) into mitochondria. The chain is Mitochondrial thiamine pyrophosphate carrier 1 (TPC1) from Chaetomium globosum (strain ATCC 6205 / CBS 148.51 / DSM 1962 / NBRC 6347 / NRRL 1970) (Soil fungus).